The sequence spans 2345 residues: Acetyl-CoA carboxylase 1 (2345 aa).

Met-1 is subject to N-acetylmethionine. Phosphoserine is present on residues Ser-5, Ser-23, Ser-25, Ser-29, Ser-34, Ser-47, Ser-49, and Ser-52. Thr-57 is subject to Phosphothreonine. The residue at position 77 (Ser-77) is a Phosphoserine. Ser-79 carries the post-translational modification Phosphoserine; by AMPK. In terms of domain architecture, Biotin carboxylation spans 116–617; sequence VIEKVLIANN…DTGWLDRLIA (502 aa). The region spanning 274–465 is the ATP-grasp domain; that stretch reads SKRILNVPQD…LPAAQLQIAM (192 aa). An ATP-binding site is contributed by 314-319; sequence GGGGKG. Mg(2+)-binding residues include Glu-423, Glu-436, and Asn-438. Residues Glu-423, Glu-436, and Asn-438 each contribute to the Mn(2+) site. The active site involves Arg-440. The residue at position 609 (Thr-609) is a Phosphothreonine. A Biotinyl-binding domain is found at 744–818; it reads FEKENDPSVM…DPGCVIAKMQ (75 aa). N6-biotinyllysine is present on Lys-785. The residue at position 834 (Ser-834) is a Phosphoserine. Residues Ser-1200 and Ser-1215 each carry the phosphoserine; by AMPK; in vitro modification. Ser-1217 carries the phosphoserine modification. Thr-1226 carries the post-translational modification Phosphothreonine. Residues Ser-1258, Ser-1262, and Ser-1272 each carry the phosphoserine modification. An N6-acetyllysine modification is found at Lys-1333. The 339-residue stretch at 1575–1913 folds into the CoA carboxyltransferase N-terminal domain; it reads PYVTKDLLQS…NVHSSVPLLN (339 aa). Residues 1575–2233 are carboxyltransferase; it reads PYVTKDLLQS…EDLVKKKIHS (659 aa). Residues Arg-1822, Lys-2126, and Arg-2128 each contribute to the CoA site. In terms of domain architecture, CoA carboxyltransferase C-terminal spans 1917-2233; that stretch reads PIDRIIEFVP…EDLVKKKIHS (317 aa). The residue at position 2152 (Thr-2152) is a Phosphothreonine.

In terms of assembly, monomer, homodimer, and homotetramer. Can form filamentous polymers. Interacts in its inactive phosphorylated form with the BRCT domains of BRCA1 which prevents ACACA dephosphorylation and inhibits lipid synthesis. Interacts with MID1IP1; interaction with MID1IP1 promotes oligomerization and increases its activity. Requires Mg(2+) as cofactor. The cofactor is Mn(2+). Biotin is required as a cofactor. Post-translationally, the N-terminus is blocked. In terms of processing, phosphorylation on Ser-1262 is required for interaction with BRCA1. Phosphorylation at Ser-79 by AMPK inactivates enzyme activity. Phosphorylated in vitro at Ser-1200 and Ser-1215 by AMPK; the relevance of phosphorylation of these sites in vivo is however unclear. Post-translationally, the biotin cofactor is covalently attached to the central biotinyl-binding domain and is required for the catalytic activity.

It localises to the cytoplasm. It is found in the cytosol. It carries out the reaction hydrogencarbonate + acetyl-CoA + ATP = malonyl-CoA + ADP + phosphate + H(+). Its pathway is lipid metabolism; malonyl-CoA biosynthesis; malonyl-CoA from acetyl-CoA: step 1/1. Its activity is regulated as follows. Inhibited by phosphorylation. Citrate promotes oligomerization of the protein into filaments that correspond to the most active form of the carboxylase. Cytosolic enzyme that catalyzes the carboxylation of acetyl-CoA to malonyl-CoA, the first and rate-limiting step of de novo fatty acid biosynthesis. This is a 2 steps reaction starting with the ATP-dependent carboxylation of the biotin carried by the biotin carboxyl carrier (BCC) domain followed by the transfer of the carboxyl group from carboxylated biotin to acetyl-CoA. The polypeptide is Acetyl-CoA carboxylase 1 (Rattus norvegicus (Rat)).